The sequence spans 568 residues: Vacuolar protein 8 (568 aa).

Glycine 2 carries N-myristoyl glycine lipidation. 3 S-palmitoyl cysteine lipidation sites follow: cysteine 4, cysteine 5, and cysteine 7. ARM repeat units follow at residues 37 to 74, 75 to 114, 116 to 155, 157 to 196, 198 to 237, 241 to 280, 282 to 321, 323 to 363, and 407 to 446; these read DKDN…FAEI, TEKY…NLAV, NENK…NLAT, DDNK…NMTH, GENR…NIAV, NRRK…NLAS, TGYQ…NISI, PLNE…NLAA, and DNSK…NLCS.

This sequence belongs to the beta-catenin family.

It localises to the vacuole membrane. Functionally, functions in both vacuole inheritance and protein targeting from the cytoplasm to vacuole. The protein is Vacuolar protein 8 (VAC8) of Eremothecium gossypii (strain ATCC 10895 / CBS 109.51 / FGSC 9923 / NRRL Y-1056) (Yeast).